We begin with the raw amino-acid sequence, 169 residues long: Small ribosomal subunit protein uS5c (169 aa).

Positions Trp-17–Val-80 constitute an S5 DRBM domain.

This sequence belongs to the universal ribosomal protein uS5 family. In terms of assembly, part of the 30S ribosomal subunit. Contacts protein S4.

It is found in the plastid. Its subcellular location is the cyanelle. Its function is as follows. With S4 and S12 plays an important role in translational accuracy. The polypeptide is Small ribosomal subunit protein uS5c (rps5) (Cyanophora paradoxa).